Reading from the N-terminus, the 406-residue chain is S-adenosylmethionine synthase (406 aa).

His5 serves as a coordination point for ATP. Asp7 provides a ligand contact to Mg(2+). K(+) is bound at residue Glu33. Residues Glu46 and Gln89 each coordinate L-methionine. Positions 89–99 are flexible loop; that stretch reads QSPDIAQGVDT. ATP contacts are provided by residues 164–166, 240–241, Asp249, 255–256, Ala272, and Lys276; these read DGK, KF, and RK. Asp249 provides a ligand contact to L-methionine. Lys280 provides a ligand contact to L-methionine.

This sequence belongs to the AdoMet synthase family. In terms of assembly, homotetramer; dimer of dimers. The cofactor is Mg(2+). Requires K(+) as cofactor.

It localises to the cytoplasm. It catalyses the reaction L-methionine + ATP + H2O = S-adenosyl-L-methionine + phosphate + diphosphate. Its pathway is amino-acid biosynthesis; S-adenosyl-L-methionine biosynthesis; S-adenosyl-L-methionine from L-methionine: step 1/1. Catalyzes the formation of S-adenosylmethionine (AdoMet) from methionine and ATP. The overall synthetic reaction is composed of two sequential steps, AdoMet formation and the subsequent tripolyphosphate hydrolysis which occurs prior to release of AdoMet from the enzyme. In Synechococcus sp. (strain ATCC 27144 / PCC 6301 / SAUG 1402/1) (Anacystis nidulans), this protein is S-adenosylmethionine synthase.